A 442-amino-acid chain; its full sequence is uncharacterized protein (442 aa).

A run of 7 helical transmembrane segments spans residues Phe-209–Tyr-229, Ile-247–Ser-267, Val-284–Cys-304, Leu-308–Trp-328, Ile-342–Ile-362, Pro-374–Pro-394, and Phe-402–Phe-422.

It is found in the membrane. This is an uncharacterized protein from Schizosaccharomyces pombe (strain 972 / ATCC 24843) (Fission yeast).